Consider the following 335-residue polypeptide: Glyceraldehyde-3-phosphate dehydrogenase (335 aa).

NAD(+) contacts are provided by residues 13–14 (RI), Asp-34, Met-79, and Ser-121. D-glyceraldehyde 3-phosphate-binding positions include 151 to 153 (SCT), Thr-182, 211 to 212 (TG), and Arg-234. The active-site Nucleophile is the Cys-152. An S-nitrosocysteine modification is found at Cys-152. An NAD(+)-binding site is contributed by Asn-316.

This sequence belongs to the glyceraldehyde-3-phosphate dehydrogenase family. Homotetramer. Post-translationally, S-nitrosylation of Cys-152 leads to translocation to the nucleus.

It localises to the cytoplasm. The protein localises to the cytosol. Its subcellular location is the cytoskeleton. It is found in the nucleus. It catalyses the reaction D-glyceraldehyde 3-phosphate + phosphate + NAD(+) = (2R)-3-phospho-glyceroyl phosphate + NADH + H(+). The enzyme catalyses S-nitroso-L-cysteinyl-[GAPDH] + L-cysteinyl-[protein] = L-cysteinyl-[GAPDH] + S-nitroso-L-cysteinyl-[protein]. It functions in the pathway carbohydrate degradation; glycolysis; pyruvate from D-glyceraldehyde 3-phosphate: step 1/5. In terms of biological role, has both glyceraldehyde-3-phosphate dehydrogenase and nitrosylase activities, thereby playing a role in glycolysis and nuclear functions, respectively. Glyceraldehyde-3-phosphate dehydrogenase is a key enzyme in glycolysis that catalyzes the first step of the pathway by converting D-glyceraldehyde 3-phosphate (G3P) into 3-phospho-D-glyceroyl phosphate. Participates in nuclear events including transcription, RNA transport, DNA replication and apoptosis. Nuclear functions are probably due to the nitrosylase activity that mediates cysteine S-nitrosylation of nuclear target proteins such as SIRT1, HDAC2 and PRKDC. This is Glyceraldehyde-3-phosphate dehydrogenase (gapdh) from Oncorhynchus mykiss (Rainbow trout).